The following is a 250-amino-acid chain: tRNA (guanine-N(1)-)-methyltransferase (250 aa).

S-adenosyl-L-methionine contacts are provided by residues Gly-108 and 127–132 (LGDFVL).

This sequence belongs to the RNA methyltransferase TrmD family. Homodimer.

It is found in the cytoplasm. It catalyses the reaction guanosine(37) in tRNA + S-adenosyl-L-methionine = N(1)-methylguanosine(37) in tRNA + S-adenosyl-L-homocysteine + H(+). In terms of biological role, specifically methylates guanosine-37 in various tRNAs. The chain is tRNA (guanine-N(1)-)-methyltransferase from Streptococcus agalactiae serotype Ia (strain ATCC 27591 / A909 / CDC SS700).